The following is a 397-amino-acid chain: Tryptophan synthase beta chain (397 aa).

Lys86 is subject to N6-(pyridoxal phosphate)lysine.

This sequence belongs to the TrpB family. Tetramer of two alpha and two beta chains. The cofactor is pyridoxal 5'-phosphate.

The catalysed reaction is (1S,2R)-1-C-(indol-3-yl)glycerol 3-phosphate + L-serine = D-glyceraldehyde 3-phosphate + L-tryptophan + H2O. Its pathway is amino-acid biosynthesis; L-tryptophan biosynthesis; L-tryptophan from chorismate: step 5/5. In terms of biological role, the beta subunit is responsible for the synthesis of L-tryptophan from indole and L-serine. The protein is Tryptophan synthase beta chain of Tolumonas auensis (strain DSM 9187 / NBRC 110442 / TA 4).